The chain runs to 978 residues: Mineralocorticoid receptor (978 aa).

Residues Met-1–Ile-602 form a modulating region. Over residues Ser-234–Asn-243 the composition is skewed to polar residues. 2 disordered regions span residues Ser-234 to Gly-331 and Gly-353 to Val-372. Phosphoserine occurs at positions 250, 259, 283, 287, and 299. The segment covering Ser-259–Pro-300 has biased composition (low complexity). A compositionally biased stretch (polar residues) spans Ala-301 to Gly-331. Zn(2+) contacts are provided by Cys-603, Cys-606, Cys-620, Cys-623, Cys-637, Cys-643, Cys-653, and Cys-656. 2 NR C4-type zinc fingers span residues Cys-603–Cys-623 and Cys-637–Cys-661. Residues Cys-603–Met-666 constitute a DNA-binding region (nuclear receptor). The segment at Asn-667–Pro-719 is hinge. Positions Gly-681–Ala-706 are disordered. Pro residues predominate over residues Gln-688–Ser-697. The NR LBD domain occupies Gln-720–Ile-958. The 21-hydroxyprogesterone site is built by Asn-764 and Gln-770. Residues Asn-764 and Gln-770 each contribute to the aldosterone site. Positions 764 and 770 each coordinate progesterone. Positions Lys-776–Lys-779 are important for coactivator binding. 21-hydroxyprogesterone is bound by residues Arg-811 and Thr-939. Residues Arg-811 and Thr-939 each coordinate aldosterone. Arg-811 and Thr-939 together coordinate progesterone.

The protein belongs to the nuclear hormone receptor family. NR3 subfamily. In terms of assembly, heteromultimeric cytoplasmic complex with HSP90, HSP70, and FKBP4, in the absence of ligand. After ligand binding, it translocates to the nucleus and binds to DNA as a homodimer and as a heterodimer with NR3C1. Binds the coactivator NCOA2. May interact with HSD11B2 in the absence of ligand. Binds the coactivators NCOA1, TIF1 and NRIP1. In terms of processing, phosphorylated. As to expression, expressed in heart and kidney.

The protein localises to the cytoplasm. It localises to the nucleus. Its subcellular location is the endoplasmic reticulum membrane. Receptor for both mineralocorticoids (MC) such as aldosterone and glucocorticoids (GC) such as corticosterone or cortisol. Binds to mineralocorticoid response elements (MRE) and transactivates target genes. The effect of MC is to increase ion and water transport and thus raise extracellular fluid volume and blood pressure and lower potassium levels. The chain is Mineralocorticoid receptor (Nr3c2) from Mus musculus (Mouse).